Consider the following 198-residue polypeptide: 3-isopropylmalate dehydratase small subunit (198 aa).

Belongs to the LeuD family. LeuD type 1 subfamily. Heterodimer of LeuC and LeuD.

It catalyses the reaction (2R,3S)-3-isopropylmalate = (2S)-2-isopropylmalate. It functions in the pathway amino-acid biosynthesis; L-leucine biosynthesis; L-leucine from 3-methyl-2-oxobutanoate: step 2/4. Catalyzes the isomerization between 2-isopropylmalate and 3-isopropylmalate, via the formation of 2-isopropylmaleate. This is 3-isopropylmalate dehydratase small subunit from Mycobacterium avium (strain 104).